The chain runs to 103 residues: RNA-binding protein Hfq (103 aa).

The region spanning 9 to 68 is the Sm domain; sequence DPFLNALRRERVPVSIYLVNGIKLQGQIESFDQFVILLKNTVSQMVYKHAISTVVPSRPV. Positions 63-103 are disordered; the sequence is VPSRPVSHHSNNAGGGTGSNFHHGSNAQGSSAPAQDSDETE. A compositionally biased stretch (polar residues) spans 81-96; the sequence is SNFHHGSNAQGSSAPA.

This sequence belongs to the Hfq family. In terms of assembly, homohexamer.

In terms of biological role, RNA chaperone that binds small regulatory RNA (sRNAs) and mRNAs to facilitate mRNA translational regulation in response to envelope stress, environmental stress and changes in metabolite concentrations. Also binds with high specificity to tRNAs. The polypeptide is RNA-binding protein Hfq (Enterobacter sp. (strain 638)).